A 225-amino-acid chain; its full sequence is Small ribosomal subunit protein uS2 (225 aa).

A compositionally biased stretch (basic and acidic residues) spans 1–13 (MAEAKPALEKEAA). The segment at 1–33 (MAEAKPALEKEAAVKTGSIPSESEDETASHKEG) is disordered.

The protein belongs to the universal ribosomal protein uS2 family.

The sequence is that of Small ribosomal subunit protein uS2 from Methanosarcina acetivorans (strain ATCC 35395 / DSM 2834 / JCM 12185 / C2A).